The sequence spans 454 residues: Bifunctional protein GlmU (454 aa).

A pyrophosphorylase region spans residues 1 to 231 (MDRATVSLIV…EAETLGVNTR (231 aa)). UDP-N-acetyl-alpha-D-glucosamine-binding positions include 11 to 14 (LAAG), Lys-25, Gln-78, 83 to 84 (GT), 106 to 108 (YGD), Gly-143, Glu-157, Asn-172, and Asn-229. Asp-108 is a Mg(2+) binding site. A Mg(2+)-binding site is contributed by Asn-229. A linker region spans residues 232-252 (AQLAEAEAEFQKRARAAALED). The interval 253-454 (GVTLTAPDTV…AKAAKKKEAP (202 aa)) is N-acetyltransferase. Residues Arg-318 and Lys-336 each contribute to the UDP-N-acetyl-alpha-D-glucosamine site. Catalysis depends on His-348, which acts as the Proton acceptor. The UDP-N-acetyl-alpha-D-glucosamine site is built by Tyr-351 and Asn-362. Acetyl-CoA is bound by residues Ala-365, 371–372 (NY), Ser-390, Ser-408, and Arg-425.

This sequence in the N-terminal section; belongs to the N-acetylglucosamine-1-phosphate uridyltransferase family. The protein in the C-terminal section; belongs to the transferase hexapeptide repeat family. As to quaternary structure, homotrimer. Requires Mg(2+) as cofactor.

The protein resides in the cytoplasm. The enzyme catalyses alpha-D-glucosamine 1-phosphate + acetyl-CoA = N-acetyl-alpha-D-glucosamine 1-phosphate + CoA + H(+). The catalysed reaction is N-acetyl-alpha-D-glucosamine 1-phosphate + UTP + H(+) = UDP-N-acetyl-alpha-D-glucosamine + diphosphate. It participates in nucleotide-sugar biosynthesis; UDP-N-acetyl-alpha-D-glucosamine biosynthesis; N-acetyl-alpha-D-glucosamine 1-phosphate from alpha-D-glucosamine 6-phosphate (route II): step 2/2. Its pathway is nucleotide-sugar biosynthesis; UDP-N-acetyl-alpha-D-glucosamine biosynthesis; UDP-N-acetyl-alpha-D-glucosamine from N-acetyl-alpha-D-glucosamine 1-phosphate: step 1/1. The protein operates within bacterial outer membrane biogenesis; LPS lipid A biosynthesis. In terms of biological role, catalyzes the last two sequential reactions in the de novo biosynthetic pathway for UDP-N-acetylglucosamine (UDP-GlcNAc). The C-terminal domain catalyzes the transfer of acetyl group from acetyl coenzyme A to glucosamine-1-phosphate (GlcN-1-P) to produce N-acetylglucosamine-1-phosphate (GlcNAc-1-P), which is converted into UDP-GlcNAc by the transfer of uridine 5-monophosphate (from uridine 5-triphosphate), a reaction catalyzed by the N-terminal domain. The sequence is that of Bifunctional protein GlmU from Cereibacter sphaeroides (strain ATCC 17023 / DSM 158 / JCM 6121 / CCUG 31486 / LMG 2827 / NBRC 12203 / NCIMB 8253 / ATH 2.4.1.) (Rhodobacter sphaeroides).